The sequence spans 509 residues: Maturase K (509 aa).

The protein belongs to the intron maturase 2 family. MatK subfamily.

The protein localises to the plastid. It is found in the chloroplast. In terms of biological role, usually encoded in the trnK tRNA gene intron. Probably assists in splicing its own and other chloroplast group II introns. In Nicotiana rustica (Aztec tobacco), this protein is Maturase K.